Reading from the N-terminus, the 358-residue chain is Peptide chain release factor 1 (358 aa).

Residue Gln233 is modified to N5-methylglutamine.

Belongs to the prokaryotic/mitochondrial release factor family. In terms of processing, methylated by PrmC. Methylation increases the termination efficiency of RF1.

Its subcellular location is the cytoplasm. Peptide chain release factor 1 directs the termination of translation in response to the peptide chain termination codons UAG and UAA. This Clostridium botulinum (strain 657 / Type Ba4) protein is Peptide chain release factor 1.